Here is a 187-residue protein sequence, read N- to C-terminus: Elongation factor P (187 aa).

The protein belongs to the elongation factor P family.

The protein resides in the cytoplasm. Its pathway is protein biosynthesis; polypeptide chain elongation. In terms of biological role, involved in peptide bond synthesis. Stimulates efficient translation and peptide-bond synthesis on native or reconstituted 70S ribosomes in vitro. Probably functions indirectly by altering the affinity of the ribosome for aminoacyl-tRNA, thus increasing their reactivity as acceptors for peptidyl transferase. This chain is Elongation factor P, found in Mycobacterium sp. (strain JLS).